We begin with the raw amino-acid sequence, 240 residues long: ATP-dependent dethiobiotin synthetase BioD (240 aa).

15-20 (EIGKTF) provides a ligand contact to ATP. T19 is a Mg(2+) binding site. Residue K40 is part of the active site. ATP is bound by residues D57, 118-121 (EGVG), and 178-179 (NR). Residues D57 and E118 each coordinate Mg(2+).

It belongs to the dethiobiotin synthetase family. As to quaternary structure, homodimer. The cofactor is Mg(2+).

It is found in the cytoplasm. The catalysed reaction is (7R,8S)-7,8-diammoniononanoate + CO2 + ATP = (4R,5S)-dethiobiotin + ADP + phosphate + 3 H(+). It participates in cofactor biosynthesis; biotin biosynthesis; biotin from 7,8-diaminononanoate: step 1/2. In terms of biological role, catalyzes a mechanistically unusual reaction, the ATP-dependent insertion of CO2 between the N7 and N8 nitrogen atoms of 7,8-diaminopelargonic acid (DAPA, also called 7,8-diammoniononanoate) to form a ureido ring. The chain is ATP-dependent dethiobiotin synthetase BioD from Burkholderia pseudomallei (strain 1106a).